A 404-amino-acid polypeptide reads, in one-letter code: DNA gyrase subunit B (404 aa).

Residues 321 to 404 enclose the Toprim domain; it reads SEIYIVEGDS…VIIMTDADVD (84 aa). Mg(2+)-binding residues include glutamate 327, aspartate 400, and aspartate 402.

This sequence belongs to the type II topoisomerase GyrB family. Heterotetramer, composed of two GyrA and two GyrB chains. In the heterotetramer, GyrA contains the active site tyrosine that forms a transient covalent intermediate with DNA, while GyrB binds cofactors and catalyzes ATP hydrolysis. Mg(2+) serves as cofactor. Mn(2+) is required as a cofactor. Requires Ca(2+) as cofactor.

The protein resides in the cytoplasm. It carries out the reaction ATP-dependent breakage, passage and rejoining of double-stranded DNA.. In terms of biological role, a type II topoisomerase that negatively supercoils closed circular double-stranded (ds) DNA in an ATP-dependent manner to modulate DNA topology and maintain chromosomes in an underwound state. Negative supercoiling favors strand separation, and DNA replication, transcription, recombination and repair, all of which involve strand separation. Also able to catalyze the interconversion of other topological isomers of dsDNA rings, including catenanes and knotted rings. Type II topoisomerases break and join 2 DNA strands simultaneously in an ATP-dependent manner. The chain is DNA gyrase subunit B (gyrB) from Bacillus cereus.